We begin with the raw amino-acid sequence, 448 residues long: Glucose-6-phosphate isomerase (448 aa).

E290 serves as the catalytic Proton donor. Active-site residues include H311 and K425.

Belongs to the GPI family.

It localises to the cytoplasm. It carries out the reaction alpha-D-glucose 6-phosphate = beta-D-fructose 6-phosphate. It functions in the pathway carbohydrate biosynthesis; gluconeogenesis. It participates in carbohydrate degradation; glycolysis; D-glyceraldehyde 3-phosphate and glycerone phosphate from D-glucose: step 2/4. Catalyzes the reversible isomerization of glucose-6-phosphate to fructose-6-phosphate. The protein is Glucose-6-phosphate isomerase of Lactococcus lactis subsp. cremoris (strain SK11).